The chain runs to 22 residues: Motilin (22 aa).

The segment covering 1–11 has biased composition (polar residues); sequence FVPFFTQSDIQ. Positions 1–22 are disordered; that stretch reads FVPFFTQSDIQKMQEKERNKGQ. A compositionally biased stretch (basic and acidic residues) spans 12–22; sequence KMQEKERNKGQ.

Belongs to the motilin family.

The protein localises to the secreted. Plays an important role in the regulation of interdigestive gastrointestinal motility and indirectly causes rhythmic contraction of duodenal and colonic smooth muscle. In Gallus gallus (Chicken), this protein is Motilin (MLN).